The following is a 344-amino-acid chain: MPKDKAVGIQVSQVSKQFGSFQAVKDVDLTVETGSLVALLGPSGSGKSTLLRLIAGLEQPDSGRIFLTGRDATNESVRDRQIGFVFQHYALFKHLTVRKNIAFGLELRKHTKEKVRARVEELLELVQLTGLGDRYPSQLSGGQRQRVALARALAVQPQVLLLDEPFGALDAKVRKDLRSWLRKLHDEVHVTTVFVTHDQEEAMEVADQIVVMNHGKVEQIGSPAEIYDNPATPFVMSFIGPVNVLPNSSHIFQAGGLDTPHPEVFLRPHDIEIAIDPIPETVPARIDRIVHLGWEVQAEVRLEDGQVLVAHLPRDRYRDLQLEPEQQVFVRPKQARSFPLNYSI.

Positions 9–239 (IQVSQVSKQF…PATPFVMSFI (231 aa)) constitute an ABC transporter domain. 41–48 (GPSGSGKS) provides a ligand contact to ATP.

It belongs to the ABC transporter superfamily. Sulfate/tungstate importer (TC 3.A.1.6) family. The complex is composed of two ATP-binding proteins (CysA), two transmembrane proteins (CysT and CysW) and a solute-binding protein (CysP).

It is found in the cell inner membrane. The catalysed reaction is sulfate(out) + ATP + H2O = sulfate(in) + ADP + phosphate + H(+). It catalyses the reaction thiosulfate(out) + ATP + H2O = thiosulfate(in) + ADP + phosphate + H(+). Functionally, part of the ABC transporter complex CysAWTP involved in sulfate/thiosulfate import. Responsible for energy coupling to the transport system. This Synechococcus elongatus (strain ATCC 33912 / PCC 7942 / FACHB-805) (Anacystis nidulans R2) protein is Sulfate/thiosulfate import ATP-binding protein CysA.